A 215-amino-acid polypeptide reads, in one-letter code: Cytochrome b6 (215 aa).

Residues 32 to 52 (IFYCFGGIVFTCFLVQVATGF) traverse the membrane as a helical segment. Residue cysteine 35 coordinates heme c. The heme b site is built by histidine 86 and histidine 100. 3 consecutive transmembrane segments (helical) span residues 90–110 (ASMM…TGGF), 116–136 (LTWV…VTGY), and 186–206 (AHTF…FLMI). Heme b is bound by residues histidine 187 and histidine 202.

This sequence belongs to the cytochrome b family. PetB subfamily. The 4 large subunits of the cytochrome b6-f complex are cytochrome b6, subunit IV (17 kDa polypeptide, PetD), cytochrome f and the Rieske protein, while the 4 small subunits are PetG, PetL, PetM and PetN. The complex functions as a dimer. The cofactor is heme b. Heme c serves as cofactor.

Its subcellular location is the plastid. It localises to the chloroplast thylakoid membrane. Its function is as follows. Component of the cytochrome b6-f complex, which mediates electron transfer between photosystem II (PSII) and photosystem I (PSI), cyclic electron flow around PSI, and state transitions. The chain is Cytochrome b6 from Trieres chinensis (Marine centric diatom).